A 622-amino-acid polypeptide reads, in one-letter code: Threonine--tRNA ligase (622 aa).

Residues 1-141 are editing domain; sequence MKTLLIHSDY…SRKITTERKE (141 aa). The catalytic stretch occupies residues 199–498; it reads PHVKYIKEKE…TLENKPPALP (300 aa). 3 residues coordinate Zn(2+): Cys291, His343, and His467.

It belongs to the class-II aminoacyl-tRNA synthetase family. As to quaternary structure, homodimer. It depends on Zn(2+) as a cofactor.

It is found in the cytoplasm. It catalyses the reaction tRNA(Thr) + L-threonine + ATP = L-threonyl-tRNA(Thr) + AMP + diphosphate + H(+). Its function is as follows. Catalyzes the attachment of threonine to tRNA(Thr) in a two-step reaction: L-threonine is first activated by ATP to form Thr-AMP and then transferred to the acceptor end of tRNA(Thr). Also edits incorrectly charged L-seryl-tRNA(Thr). This chain is Threonine--tRNA ligase, found in Methanococcus maripaludis (strain C7 / ATCC BAA-1331).